A 478-amino-acid polypeptide reads, in one-letter code: 7-dehydrocholesterol reductase (478 aa).

A disordered region spans residues 1-28 (MMASDRVRKRHKGSANGAQTVEKEPSKE). 6 helical membrane passes run 43–63 (LSGV…FIMA), 97–117 (WAAA…YMCV), 180–200 (WIPL…FAFI), 269–289 (VTNS…DFFW), 309–329 (LGWG…LYLV), and 333–353 (IQLS…GYYI). Residues lysine 361, arginine 365, methionine 398, tryptophan 403, and 410–411 (NY) contribute to the NADP(+) site. A helical membrane pass occupies residues 424 to 444 (ACGGNHLLPYFYIIYMTILLV). Residues aspartate 450, 454–458 (CSNKY), and tyrosine 465 each bind NADP(+).

This sequence belongs to the ERG4/ERG24 family.

The protein localises to the endoplasmic reticulum membrane. The enzyme catalyses cholesterol + NADP(+) = 7-dehydrocholesterol + NADPH + H(+). It carries out the reaction 7-dehydrodesmosterol + NADPH + H(+) = desmosterol + NADP(+). It functions in the pathway steroid biosynthesis; cholesterol biosynthesis. Its function is as follows. Catalyzes the last step of the cholesterol synthesis pathway, which transforms cholesta-5,7-dien-3beta-ol (7-dehydrocholesterol,7-DHC) into cholesterol by reducing the C7-C8 double bond of its sterol core. Can also metabolize cholesta-5,7,24-trien-3beta-ol (7-dehydrodemosterol, 7-DHD) to desmosterol, which is then metabolized by the Delta(24)-sterol reductase (DHCR24) to cholesterol. Modulates ferroptosis (a form of regulated cell death driven by iron-dependent lipid peroxidation) through the metabolic breakdown of the anti-ferroptotic metabolites 7-DHC and 7-DHD which, when accumulated, divert the propagation of peroxyl radical-mediated damage from phospholipid components to its sterol core, protecting plasma and mitochondrial membranes from phospholipid autoxidation. The protein is 7-dehydrocholesterol reductase (dhcr7) of Danio rerio (Zebrafish).